The chain runs to 221 residues: Small ribosomal subunit protein uS5 (221 aa).

An S5 DRBM domain is found at 46–109 (LKDEVINIER…DNAKLNIIEI (64 aa)).

Belongs to the universal ribosomal protein uS5 family. Part of the 30S ribosomal subunit. Contacts protein S4.

In terms of biological role, with S4 and S12 plays an important role in translational accuracy. This Picrophilus torridus (strain ATCC 700027 / DSM 9790 / JCM 10055 / NBRC 100828 / KAW 2/3) protein is Small ribosomal subunit protein uS5.